The primary structure comprises 89 residues: UPF0223 protein BAMEG_4214 (89 aa).

The protein belongs to the UPF0223 family.

The sequence is that of UPF0223 protein BAMEG_4214 from Bacillus anthracis (strain CDC 684 / NRRL 3495).